The chain runs to 148 residues: uncharacterized protein (148 aa).

The region spanning 1 to 144 is the N-acetyltransferase domain; sequence MNIKRITTEA…PHVLMTKEIS (144 aa).

This is an uncharacterized protein from Bacillus subtilis (strain 168).